A 159-amino-acid chain; its full sequence is Ribosomal RNA large subunit methyltransferase H (159 aa).

S-adenosyl-L-methionine is bound by residues Leu-76, Gly-108, and 127–132 (FGRLTY).

It belongs to the RNA methyltransferase RlmH family. Homodimer.

Its subcellular location is the cytoplasm. It catalyses the reaction pseudouridine(1915) in 23S rRNA + S-adenosyl-L-methionine = N(3)-methylpseudouridine(1915) in 23S rRNA + S-adenosyl-L-homocysteine + H(+). Its function is as follows. Specifically methylates the pseudouridine at position 1915 (m3Psi1915) in 23S rRNA. The chain is Ribosomal RNA large subunit methyltransferase H from Enterococcus faecalis (strain ATCC 700802 / V583).